The following is a 580-amino-acid chain: Negative elongation factor B (580 aa).

K519 is subject to N6-acetyllysine. The tract at residues 548–580 is disordered; the sequence is LEQLDHRKPSPAQAAETPALELPLPSVPAPAPL. S557 is modified (phosphoserine).

The protein belongs to the NELF-B family. As to quaternary structure, the NELF complex is composed of NELFA, NELFB, NELFCD (isoform NELF-C or isoform NELF-D) and NELFE; the N-terminus of NELFB binds to the NELFA:NELFCD subcomplex. Binds RNA which may help to stabilize the NELF complex on nucleic acid. Interacts with the first BRCT repeat of BRCA1. Interacts with KIAA1191. Interacts with NELFE. Widely expressed. Expressed in heart, brain, lung, placenta, liver, skeletal muscle, kidney and pancreas.

The protein resides in the nucleus. In terms of biological role, essential component of the NELF complex, a complex that negatively regulates the elongation of transcription by RNA polymerase II. The NELF complex, which acts via an association with the DSIF complex and causes transcriptional pausing, is counteracted by the P-TEFb kinase complex. May be able to induce chromatin unfolding. Essential for early embryogenesis; plays an important role in maintaining the undifferentiated state of embryonic stem cells (ESCs) by preventing unscheduled expression of developmental genes. Plays a key role in establishing the responsiveness of stem cells to developmental cues; facilitates plasticity and cell fate commitment in ESCs by establishing the appropriate expression level of signaling molecules. Supports the transcription of genes involved in energy metabolism in cardiomyocytes; facilitates the association of transcription initiation factors with the promoters of the metabolism-related genes. (Microbial infection) The NELF complex is involved in HIV-1 latency possibly involving recruitment of PCF11 to paused RNA polymerase II. In vitro, binds weakly to the HIV-1 TAR RNA which is located in the long terminal repeat (LTR) of HIV-1. The sequence is that of Negative elongation factor B (NELFB) from Homo sapiens (Human).